A 546-amino-acid polypeptide reads, in one-letter code: Thermolysin (546 aa).

Residues 1–25 (MDKRAMLGAIGLAFGLMAWPFGASA) form the signal peptide. A propeptide spans 26-228 (KEKSMVWNEQ…EAKPGGGQPV (203 aa)) (activation peptide). The Ca(2+) site is built by D287, D289, Q291, and D368. H372 is a binding site for Zn(2+). The active site involves E373. Zn(2+)-binding residues include H376 and E396. Ca(2+)-binding residues include N413, D415, E417, E420, Y423, T424, I427, and D430. The active-site Proton donor is the H461.

Belongs to the peptidase M4 family. The cofactor is Ca(2+). It depends on Zn(2+) as a cofactor.

Its subcellular location is the secreted. It catalyses the reaction Preferential cleavage: Xaa-|-Leu &gt; Xaa-|-Phe.. Functionally, extracellular zinc metalloprotease. Has collagenase activity. The protein is Thermolysin (npr) of Bacillus sp. (strain EA1).